The primary structure comprises 561 residues: 3beta-hydroxysteroid-dehydrogenase/decarboxylase isoform 3 (561 aa).

Lysine 166 contributes to the NAD(+) binding site. A Reticulon domain is found at 379–561 (VADILLWRNE…SDASSKPMFM (183 aa)). A run of 3 helical transmembrane segments spans residues 392 to 412 (FVSF…GNTF), 420 to 440 (LFIF…IFGF), and 504 to 524 (SLAA…FIYE).

This sequence belongs to the 3-beta-HSD family.

Its subcellular location is the endoplasmic reticulum membrane. The catalysed reaction is a 3beta-hydroxysteroid-4alpha-carboxylate + NADP(+) = a 3-oxosteroid + CO2 + NADPH. It catalyses the reaction a 3beta-hydroxysteroid-4alpha-carboxylate + NAD(+) = a 3-oxosteroid + CO2 + NADH. Its pathway is steroid biosynthesis; zymosterol biosynthesis; zymosterol from lanosterol: step 4/6. The chain is 3beta-hydroxysteroid-dehydrogenase/decarboxylase isoform 3 (3BETAHSD/D3) from Arabidopsis thaliana (Mouse-ear cress).